We begin with the raw amino-acid sequence, 183 residues long: UPF0397 protein PBPRA2239 (183 aa).

A run of 5 helical transmembrane segments spans residues 8–28 (VVLI…MFGI), 41–61 (AVLA…VGFI), 69–89 (FAGW…GLII), 110–130 (FALF…CSAY), and 147–167 (LIII…YILT).

Belongs to the UPF0397 family.

The protein localises to the cell membrane. The polypeptide is UPF0397 protein PBPRA2239 (Photobacterium profundum (strain SS9)).